Consider the following 382-residue polypeptide: Anhydro-N-acetylmuramic acid kinase (382 aa).

Residue 22-29 (GTSMDGVD) participates in ATP binding.

Belongs to the anhydro-N-acetylmuramic acid kinase family.

It catalyses the reaction 1,6-anhydro-N-acetyl-beta-muramate + ATP + H2O = N-acetyl-D-muramate 6-phosphate + ADP + H(+). It functions in the pathway amino-sugar metabolism; 1,6-anhydro-N-acetylmuramate degradation. The protein operates within cell wall biogenesis; peptidoglycan recycling. In terms of biological role, catalyzes the specific phosphorylation of 1,6-anhydro-N-acetylmuramic acid (anhMurNAc) with the simultaneous cleavage of the 1,6-anhydro ring, generating MurNAc-6-P. Is required for the utilization of anhMurNAc either imported from the medium or derived from its own cell wall murein, and thus plays a role in cell wall recycling. The chain is Anhydro-N-acetylmuramic acid kinase from Burkholderia cenocepacia (strain ATCC BAA-245 / DSM 16553 / LMG 16656 / NCTC 13227 / J2315 / CF5610) (Burkholderia cepacia (strain J2315)).